We begin with the raw amino-acid sequence, 377 residues long: Carboxynorspermidine/carboxyspermidine decarboxylase (377 aa).

N6-(pyridoxal phosphate)lysine is present on K41. 2 residues coordinate substrate: E238 and D274.

The protein belongs to the Orn/Lys/Arg decarboxylase class-II family. NspC subfamily. In terms of assembly, homodimer. Pyridoxal 5'-phosphate is required as a cofactor.

The protein resides in the cytoplasm. It carries out the reaction carboxynorspermidine + H(+) = norspermidine + CO2. The enzyme catalyses carboxyspermidine + H(+) = spermidine + CO2. Dithiothreitol greatly stimulates activity, maximum stimulation being at 5-20 mM dithiothreitol concentration. Fe(3+), Fe(2+) and Mn(2+) severely inhibit activity (88%, 82% and 50%, respectively), whereas Zn(2+) has a slightly inhibitory effect (23%) and Mg(2+), Ca(2+), Cu(2+) and Cu(+) have no effect. In terms of biological role, catalyzes the decarboxylation of carboxynorspermidine and carboxyspermidine. 2,3-diaminopropionic acid, 2,4-diaminobutyric acid, L-ornithine or L-lysine cannot serve as substrates. The protein is Carboxynorspermidine/carboxyspermidine decarboxylase of Vibrio alginolyticus.